Reading from the N-terminus, the 298-residue chain is MPEAGLAEAFGVTEEARAKINLALHVTGQRADGYHLLDMLVTFADCGDRLGFLPAQTDAFTLSGRFGEMLAGDGGTNLVLRARDLLREQFGALAFPVHIHLQKNLPVASGIGGGSADAAAALRGLMRLWGMSLPVEALASLALKLGADVPMCLESRPLIARGIGEEIEAVPDLPAFAMVLANPLKGVSTPEVFRRLTTKNNSALSLAPGLSGSAGWLAVIDAARNDLEPPARQLVPEIAVISAMLQARGALLTRMSGSGATCFGIFASMAEAQDAAAALHGERPDWYFQATETVSGGM.

The active site involves lysine 19. 106–116 contacts ATP; the sequence is PVASGIGGGSA. Aspartate 148 is a catalytic residue.

It belongs to the GHMP kinase family. IspE subfamily.

The enzyme catalyses 4-CDP-2-C-methyl-D-erythritol + ATP = 4-CDP-2-C-methyl-D-erythritol 2-phosphate + ADP + H(+). The protein operates within isoprenoid biosynthesis; isopentenyl diphosphate biosynthesis via DXP pathway; isopentenyl diphosphate from 1-deoxy-D-xylulose 5-phosphate: step 3/6. Functionally, catalyzes the phosphorylation of the position 2 hydroxy group of 4-diphosphocytidyl-2C-methyl-D-erythritol. This Rhizobium leguminosarum bv. trifolii (strain WSM2304) protein is 4-diphosphocytidyl-2-C-methyl-D-erythritol kinase.